The sequence spans 561 residues: Sesquiterpene synthase TPS2 (561 aa).

The interval 6–26 (ANGHSDVPSTQPPIGKQKKEI) is disordered. The (2E,6E)-farnesyl diphosphate site is built by Arg-277, Asp-314, Asp-318, Arg-455, and Asp-458. Residues Asp-314 and Asp-318 each contribute to the Mg(2+) site. The DDXXD motif motif lies at 314 to 318 (DDTYD). Residues Asp-458, Ser-462, and Glu-466 each coordinate Mg(2+).

Belongs to the terpene synthase family. Tpsa subfamily. As to quaternary structure, monomer. Mg(2+) is required as a cofactor.

Its subcellular location is the cytoplasm. The catalysed reaction is (2E,6E)-farnesyl diphosphate = beta-ylangene + diphosphate. It carries out the reaction (2E,6E)-farnesyl diphosphate = beta-copaene + diphosphate. It catalyses the reaction (2E,6E)-farnesyl diphosphate = beta-cubebene + diphosphate. It functions in the pathway secondary metabolite biosynthesis; terpenoid biosynthesis. Functionally, sesquiterpene synthase involved in the biosynthesis of volatile organic compounds. Mediates the conversion of (2E,6E)-farnesyl diphosphate (FPP) into beta-ylangene, beta-copaene and beta-cubebene. Does not use (2E)-geranyl diphosphate (GPP) as substrate. This Cananga odorata (Ylang-ylang tree) protein is Sesquiterpene synthase TPS2.